We begin with the raw amino-acid sequence, 213 residues long: Urease accessory protein UreG (213 aa).

GTP is bound at residue 17–24 (GPVGSGKT).

The protein belongs to the SIMIBI class G3E GTPase family. UreG subfamily. Homodimer. UreD, UreF and UreG form a complex that acts as a GTP-hydrolysis-dependent molecular chaperone, activating the urease apoprotein by helping to assemble the nickel containing metallocenter of UreC. The UreE protein probably delivers the nickel.

It is found in the cytoplasm. In terms of biological role, facilitates the functional incorporation of the urease nickel metallocenter. This process requires GTP hydrolysis, probably effectuated by UreG. The chain is Urease accessory protein UreG from Delftia acidovorans (strain DSM 14801 / SPH-1).